Reading from the N-terminus, the 371-residue chain is Protein NDRG2 (371 aa).

The tract at residues 1–21 is disordered; sequence MAELQEVQITEEKPLLPGQTP. A2 bears the N-acetylalanine mark. At T20 the chain carries Phosphothreonine. Residues S326 and S328 each carry the phosphoserine modification. At T330 the chain carries Phosphothreonine. The residue at position 332 (S332) is a Phosphoserine. T334 carries the phosphothreonine modification. The segment at 334 to 371 is disordered; sequence TSAASVDGNRSRSRTLSQSSESGTLSSGPPGHTMEVSC. Phosphoserine occurs at positions 335, 338, and 344. Over residues 347 to 361 the composition is skewed to low complexity; that stretch reads RTLSQSSESGTLSSG. T348 is modified (phosphothreonine). Phosphoserine is present on residues S350, S352, S353, and S355. Residue T357 is modified to Phosphothreonine. Residue S370 is modified to Phosphoserine.

It belongs to the NDRG family. Interacts with CTNNB1.

It is found in the cytoplasm. The protein resides in the perinuclear region. It localises to the cell projection. The protein localises to the growth cone. Its function is as follows. Contributes to the regulation of the Wnt signaling pathway. Down-regulates CTNNB1-mediated transcriptional activation of target genes, such as CCND1, and may thereby act as tumor suppressor. May be involved in dendritic cell and neuron differentiation. In Pongo abelii (Sumatran orangutan), this protein is Protein NDRG2 (NDRG2).